Here is a 108-residue protein sequence, read N- to C-terminus: Nucleoid-associated protein PSPTO_3645 (108 aa).

Positions 85-96 (QASQDKTASMTA) are enriched in polar residues. Positions 85 to 108 (QASQDKTASMTAGMQLPPGMKLPF) are disordered.

Belongs to the YbaB/EbfC family. As to quaternary structure, homodimer.

Its subcellular location is the cytoplasm. The protein localises to the nucleoid. Binds to DNA and alters its conformation. May be involved in regulation of gene expression, nucleoid organization and DNA protection. This Pseudomonas syringae pv. tomato (strain ATCC BAA-871 / DC3000) protein is Nucleoid-associated protein PSPTO_3645.